Consider the following 82-residue polypeptide: ATP synthase subunit c, chloroplastic (82 aa).

Transmembrane regions (helical) follow at residues 7 to 27 and 57 to 77; these read AASVVASGLSVGLAAIGPGIG and LAFMESLTIYGLVVALALLFA.

This sequence belongs to the ATPase C chain family. As to quaternary structure, F-type ATPases have 2 components, F(1) - the catalytic core - and F(0) - the membrane proton channel. F(1) has five subunits: alpha(3), beta(3), gamma(1), delta(1), epsilon(1). F(0) has four main subunits: a(1), b(1), b'(1) and c(10-14). The alpha and beta chains form an alternating ring which encloses part of the gamma chain. F(1) is attached to F(0) by a central stalk formed by the gamma and epsilon chains, while a peripheral stalk is formed by the delta, b and b' chains.

The protein resides in the plastid. The protein localises to the chloroplast thylakoid membrane. F(1)F(0) ATP synthase produces ATP from ADP in the presence of a proton or sodium gradient. F-type ATPases consist of two structural domains, F(1) containing the extramembraneous catalytic core and F(0) containing the membrane proton channel, linked together by a central stalk and a peripheral stalk. During catalysis, ATP synthesis in the catalytic domain of F(1) is coupled via a rotary mechanism of the central stalk subunits to proton translocation. In terms of biological role, key component of the F(0) channel; it plays a direct role in translocation across the membrane. A homomeric c-ring of between 10-14 subunits forms the central stalk rotor element with the F(1) delta and epsilon subunits. This Rhodomonas salina (Cryptomonas salina) protein is ATP synthase subunit c, chloroplastic.